We begin with the raw amino-acid sequence, 827 residues long: MALEIDYVLSHISQEDKIALLAGIDFWHTHPIPELNVPSIRSTDGPNGIRGTKFFAGVPAACLPCGTALASTWDQNLLREVGVLIGKECLAKGAHCWLGPTINMPRSPLGGRGFESFAEDPHLAGAMAASMITGCESTGVISAVKHFVGNDQEHERRAVDVLVTQRALREIYLRPFQIVARDAGPGALMTSYNKINGKHVVESKEMLDMVRQEWKWNPLIMSDWLGTYTTIDSMNAGLDLEMPGPSRYRGRYVESALQARLIKESTIDSRARKVLEFVQQASRAPVSAVETGRDYPEDRALNRNLCANSIVLLKNQNDILPLPKTIKKIALVGSHVRTPAISGGGSASLEPYYTVSLYDAVSEALPHTEILYEVGAYAHKMLPVIDRLLTNAVMHFYNEPVGTERILRATQPMSKTAFQLMDFNAPELNRGLFYATLTGDFTPDVSGVWDFGLTVFGTGLLYVDDELVVDNTTHQTRGTAFFGKGTVQELGSKTLNAGQTYKIRIEYGSANTSPMKAIGVVHFGGGAAHLGACLHVDSAEMVRSAVKAAAEADYTILCTGLNHEWESEGFDRSHMDLPPGIDALITSVLDVAANKTVIVNQSGTPVTMPWADRARGIVQAWYGGNETGHGIADVIFGDVNPSGKLPLSWPVDVKHNPAYLNYASVGGRVLYGEDVYVGYRYYEKVGREVLFPFGHGLSYTTFTVSPDVVFSQEVFRPEEPPTAAVKIKNTGKVAGAQVLQLYISAPHSPTPRPTKELHGFTKVLLQPGEERVAHIRMDKYATNFWDEIEGMWKSEEGIYEALIGTSSQNILAKGTFRVDRTRYWLGL.

D223 is a catalytic residue. The 160-residue stretch at 387-546 (RLLTNAVMHF…DSAEMVRSAV (160 aa)) folds into the PA14 domain. N-linked (GlcNAc...) asparagine glycans are attached at residues N471, N594, N600, and N625.

Belongs to the glycosyl hydrolase 3 family.

It localises to the secreted. The catalysed reaction is Hydrolysis of terminal, non-reducing beta-D-glucosyl residues with release of beta-D-glucose.. It functions in the pathway glycan metabolism; cellulose degradation. Beta-glucosidases are one of a number of cellulolytic enzymes involved in the degradation of cellulosic biomass. Catalyzes the last step releasing glucose from the inhibitory cellobiose. The chain is Probable beta-glucosidase H (bglH) from Aspergillus oryzae (strain ATCC 42149 / RIB 40) (Yellow koji mold).